Reading from the N-terminus, the 254-residue chain is Mitochondrial cardiolipin hydrolase (254 aa).

Over 1–9 the chain is Mitochondrial intermembrane; it reads MERFRWQVA. Residues 1–43 are required for mitochondrial localization; sequence MERFRWQVAAVAAVGLALALEALPSVLCWLRAGRRQQQRPPRR. The chain crosses the membrane as a helical span at residues 10–32; sequence AVAAVGLALALEALPSVLCWLRA. The Cytoplasmic segment spans residues 33 to 254; sequence GRRQQQRPPR…SKCSHHLSQV (222 aa). The C3H1-type; atypical zinc-finger motif lies at 49–82; it reads PSQVTCTEALLQAPGEAPSGPPAGCRCSLPHGES. The PLD phosphodiesterase domain occupies 155–182; the sequence is DLGYMHHKFAIVDKKVLITGSLNWTTQA. Catalysis depends on residues His-160, Lys-162, and Asp-167.

The protein belongs to the phospholipase D family. MitoPLD/Zucchini subfamily. As to quaternary structure, homodimer. Interacts with MOV10L1. Interacts with MIGA1 and MIGA2; possibly facilitating homodimer formation. Interacts with GK2.

It is found in the mitochondrion outer membrane. The protein localises to the nucleus membrane. Its subcellular location is the cell membrane. It localises to the golgi apparatus. It carries out the reaction a cardiolipin + H2O = a 1,2-diacyl-sn-glycero-3-phospho-(1'-sn-glycerol) + a 1,2-diacyl-sn-glycero-3-phosphate + H(+). Its activity is regulated as follows. Single stranded DNA (ssDNA) hydrolase activity does not depend upon, but is stimulated by the presence of Ca(2+) and Mn(2+). MIGA1 and MIGA2 increase PLD6 self-association affinity and affects the homodimer conformation facilitating its phospholipase activity over the nuclease activity. MYC induces its expression and stimulates its phospholipase activity. Presents phospholipase and nuclease activities, depending on the different physiological conditions. Interaction with Mitoguardin (MIGA1 or MIGA2) affects the dimer conformation, facilitating the lipase activity over the nuclease activity. Plays a key role in mitochondrial fusion and fission via its phospholipase activity. In its phospholipase role, it uses the mitochondrial lipid cardiolipin as substrate to generate phosphatidate (PA or 1,2-diacyl-sn-glycero-3-phosphate), a second messenger signaling lipid. Production of PA facilitates Mitofusin-mediated fusion, whereas the cleavage of PA by the Lipin family of phosphatases produces diacylgycerol (DAG) which promotes mitochondrial fission. Both Lipin and DAG regulate mitochondrial dynamics and membrane fusion/fission, important processes for adapting mitochondrial metabolism to changes in cell physiology. Mitochondrial fusion enables cells to cope with the increased nucleotide demand during DNA synthesis. Mitochondrial function and dynamics are closely associated with biological processes such as cell growth, proliferation, and differentiation. Mediator of MYC activity, promotes mitochondrial fusion and activates AMPK which in turn inhibits YAP/TAZ, thereby inducing cell growth and proliferation. The endonuclease activity plays a critical role in PIWI-interacting RNA (piRNA) biogenesis during spermatogenesis. Implicated in spermatogenesis and sperm fertility in testicular germ cells, its single strand-specific nuclease activity is critical for the biogenesis/maturation of PIWI-interacting RNA (piRNA). MOV10L1 selectively binds to piRNA precursors and funnels them to the endonuclease that catalyzes the first cleavage step of piRNA processing to generate piRNA intermediate fragments that are subsequently loaded to Piwi proteins. Cleaves either DNA or RNA substrates with similar affinity, producing a 5' phosphate end, in this way it participates in the processing of primary piRNA transcripts. piRNAs provide essential protection against the activity of mobile genetic elements. piRNA-mediated transposon silencing is thus critical for maintaining genome stability, in particular in germline cells when transposons are mobilized as a consequence of wide-spread genomic demethylation. PA may act as signaling molecule in the recognition/transport of the precursor RNAs of primary piRNAs. Interacts with tesmin in testes, suggesting a role in spermatogenesis via association with its interacting partner. This Canis lupus familiaris (Dog) protein is Mitochondrial cardiolipin hydrolase (PLD6).